Reading from the N-terminus, the 591-residue chain is Aspartate--tRNA(Asp/Asn) ligase (591 aa).

Glutamate 176 lines the L-aspartate pocket. The segment at 200–203 (QLFK) is aspartate. Arginine 222 is an L-aspartate binding site. Residues 222–224 (RDE) and glutamine 231 each bind ATP. L-aspartate is bound at residue histidine 450. An ATP-binding site is contributed by glutamate 484. An L-aspartate-binding site is contributed by arginine 491. 536 to 539 (GLDR) serves as a coordination point for ATP.

The protein belongs to the class-II aminoacyl-tRNA synthetase family. Type 1 subfamily. Homodimer.

The protein resides in the cytoplasm. It carries out the reaction tRNA(Asx) + L-aspartate + ATP = L-aspartyl-tRNA(Asx) + AMP + diphosphate. In terms of biological role, aspartyl-tRNA synthetase with relaxed tRNA specificity since it is able to aspartylate not only its cognate tRNA(Asp) but also tRNA(Asn). Reaction proceeds in two steps: L-aspartate is first activated by ATP to form Asp-AMP and then transferred to the acceptor end of tRNA(Asp/Asn). The protein is Aspartate--tRNA(Asp/Asn) ligase of Bacillus thuringiensis (strain Al Hakam).